Here is a 241-residue protein sequence, read N- to C-terminus: Diacetyl reductase [(S)-acetoin forming] (241 aa).

6 to 30 (LVTGAGQGIGKAIALRLVKDGFAVA) contacts NAD(+). Residue Ser139 participates in substrate binding. Tyr152 serves as the catalytic Proton acceptor. Residue Lys156 is part of the active site.

Belongs to the short-chain dehydrogenases/reductases (SDR) family. Homotetramer.

It catalyses the reaction (S)-acetoin + NAD(+) = diacetyl + NADH + H(+). Functionally, catalyzes the irreversible reduction of 2,3-butanediol to (S)-acetoin in the presence of NADH. This is Diacetyl reductase [(S)-acetoin forming] (budC) from Raoultella terrigena (Klebsiella terrigena).